A 375-amino-acid chain; its full sequence is 23S rRNA (uracil(747)-C(5))-methyltransferase RlmC (375 aa).

4 residues coordinate [4Fe-4S] cluster: Cys3, Cys11, Cys14, and Cys87. S-adenosyl-L-methionine contacts are provided by Gln212, Phe241, Glu262, and Asn307. The Nucleophile role is filled by Cys334.

The protein belongs to the class I-like SAM-binding methyltransferase superfamily. RNA M5U methyltransferase family. RlmC subfamily.

It carries out the reaction uridine(747) in 23S rRNA + S-adenosyl-L-methionine = 5-methyluridine(747) in 23S rRNA + S-adenosyl-L-homocysteine + H(+). Its function is as follows. Catalyzes the formation of 5-methyl-uridine at position 747 (m5U747) in 23S rRNA. In Yersinia enterocolitica serotype O:8 / biotype 1B (strain NCTC 13174 / 8081), this protein is 23S rRNA (uracil(747)-C(5))-methyltransferase RlmC.